A 233-amino-acid polypeptide reads, in one-letter code: Small ribosomal subunit protein uS2 (233 aa).

It belongs to the universal ribosomal protein uS2 family.

The sequence is that of Small ribosomal subunit protein uS2 from Clostridium botulinum (strain Alaska E43 / Type E3).